Reading from the N-terminus, the 80-residue chain is Translation initiation factor IF-1 (80 aa).

In terms of domain architecture, S1-like spans 6 to 80 (RKQEHEKERG…LTRGRIVYRL (75 aa)).

Belongs to the IF-1 family. As to quaternary structure, component of the 30S ribosomal translation pre-initiation complex which assembles on the 30S ribosome in the order IF-2 and IF-3, IF-1 and N-formylmethionyl-tRNA(fMet); mRNA recruitment can occur at any time during PIC assembly.

Its subcellular location is the cytoplasm. Its function is as follows. One of the essential components for the initiation of protein synthesis. Stabilizes the binding of IF-2 and IF-3 on the 30S subunit to which N-formylmethionyl-tRNA(fMet) subsequently binds. Helps modulate mRNA selection, yielding the 30S pre-initiation complex (PIC). Upon addition of the 50S ribosomal subunit IF-1, IF-2 and IF-3 are released leaving the mature 70S translation initiation complex. The polypeptide is Translation initiation factor IF-1 (Aquifex aeolicus (strain VF5)).